Here is a 469-residue protein sequence, read N- to C-terminus: Putative multidrug resistance protein MdtD (469 aa).

A run of 13 helical transmembrane segments spans residues 8–28 (LWIV…VNTA), 45–65 (SVIV…GWLA), 68–88 (VGVK…SLLC), 102–122 (VIQG…VMKI), 134–154 (FVTL…GFLV), 161–181 (WIFL…LWLM), 191–211 (FDIS…LALD), 215–235 (GLGL…LALA), 263–283 (LIGS…TPVF), 286–306 (IGLG…IIGS), 338–358 (LSFP…VLFF), 392–412 (MVMQ…LGVF), and 426–446 (SAFL…ALIF).

The protein belongs to the major facilitator superfamily. TCR/Tet family.

The protein resides in the cell inner membrane. In Yersinia enterocolitica serotype O:8 / biotype 1B (strain NCTC 13174 / 8081), this protein is Putative multidrug resistance protein MdtD.